The primary structure comprises 358 residues: Heterogeneous nuclear ribonucleoprotein A2 homolog 2 (358 aa).

RRM domains lie at 9 to 92 and 100 to 179; these read RKLF…ESAK and KKLF…LSKQ. Disordered regions lie at residues 182 to 217 and 333 to 358; these read QDVQ…FRGG and YGGG…RNRY. Positions 193 to 217 are enriched in gly residues; that stretch reads GNFGFGDSRGGGNFGSGPGGNFRGG. Residues 309 to 352 form a nuclear targeting sequence region; the sequence is QQSSSYGPMKSGGNFGGNRSMGGPYGGGNYGPGNGSGASGGGGY.

It localises to the nucleus. Its function is as follows. Forms complexes (ribonucleosomes) with at least 20 other different hnRNP and heterogeneous nuclear RNA in the nucleus. This chain is Heterogeneous nuclear ribonucleoprotein A2 homolog 2, found in Xenopus laevis (African clawed frog).